A 579-amino-acid polypeptide reads, in one-letter code: Effector protein HopAB3 (579 aa).

Disordered stretches follow at residues 1–140 (MAGI…TGAV), 214–294 (VRQQ…NQVP), and 384–408 (PARA…PDSA). A host recognition; Pto interaction region spans residues 1–336 (MAGINGAGPS…LRAALERHIL (336 aa)). Composition is skewed to low complexity over residues 23–39 (ASGG…SSNS), 89–101 (RPQE…APQA), 219–248 (ASAP…ESSS), 266–281 (NQRR…ASQR), and 384–402 (PARA…ATVS). Residues 337–579 (HRRPIPMDIA…IAKYAFRIVP (243 aa)) are E3 ubiquitin-protein ligase.

It belongs to the HopAB family. Interacts physically with plant cell Pto. In terms of processing, auto-ubiquitinated.

The protein resides in the secreted. Its function is as follows. Effector protein involved in gene-for-gene resistance in tomato plants. It is recognized by the host Pto resistance protein and elicits Pto and Prf-dependent hypersensitive response (HR) and programmed cell death (PCD), resulting in host immunity. In susceptible plants, acts as a virulence factor by suppressing PCD and HR-based plant immunity. This function requires its E3 ubiquitin ligase activity probably by recruiting E2 enzymes and transferring ubiquitin molecules to cellular proteins involved in regulation of PCD and targeting them for degradation. Enhances the development of disease symptoms and bacterial growth. This chain is Effector protein HopAB3 (hopAB3), found in Pseudomonas syringae pv. tomato.